Consider the following 190-residue polypeptide: GTP cyclohydrolase 1 (190 aa).

Residues cysteine 80, histidine 83, and cysteine 151 each coordinate Zn(2+).

Belongs to the GTP cyclohydrolase I family. As to quaternary structure, toroid-shaped homodecamer, composed of two pentamers of five dimers.

The catalysed reaction is GTP + H2O = 7,8-dihydroneopterin 3'-triphosphate + formate + H(+). It functions in the pathway cofactor biosynthesis; 7,8-dihydroneopterin triphosphate biosynthesis; 7,8-dihydroneopterin triphosphate from GTP: step 1/1. The chain is GTP cyclohydrolase 1 (folE) from Rickettsia prowazekii (strain Madrid E).